The primary structure comprises 413 residues: Glutamyl-tRNA reductase (413 aa).

Substrate contacts are provided by residues 49–52 (TCNR), S105, 110–112 (EPQ), and Q116. The Nucleophile role is filled by C50. An NADP(+)-binding site is contributed by 185-190 (GAGETI).

Belongs to the glutamyl-tRNA reductase family. Homodimer.

It catalyses the reaction (S)-4-amino-5-oxopentanoate + tRNA(Glu) + NADP(+) = L-glutamyl-tRNA(Glu) + NADPH + H(+). It participates in porphyrin-containing compound metabolism; protoporphyrin-IX biosynthesis; 5-aminolevulinate from L-glutamyl-tRNA(Glu): step 1/2. Functionally, catalyzes the NADPH-dependent reduction of glutamyl-tRNA(Glu) to glutamate 1-semialdehyde (GSA). The chain is Glutamyl-tRNA reductase from Coxiella burnetii (strain Dugway 5J108-111).